A 481-amino-acid polypeptide reads, in one-letter code: Glutamate--tRNA ligase (481 aa).

Positions P9–T19 match the 'HIGH' region motif. Positions K249–R253 match the 'KMSKS' region motif. K252 serves as a coordination point for ATP.

The protein belongs to the class-I aminoacyl-tRNA synthetase family. Glutamate--tRNA ligase type 1 subfamily. As to quaternary structure, monomer.

It is found in the cytoplasm. It catalyses the reaction tRNA(Glu) + L-glutamate + ATP = L-glutamyl-tRNA(Glu) + AMP + diphosphate. In terms of biological role, catalyzes the attachment of glutamate to tRNA(Glu) in a two-step reaction: glutamate is first activated by ATP to form Glu-AMP and then transferred to the acceptor end of tRNA(Glu). The chain is Glutamate--tRNA ligase from Picosynechococcus sp. (strain ATCC 27264 / PCC 7002 / PR-6) (Agmenellum quadruplicatum).